Consider the following 460-residue polypeptide: Phosphoenolpyruvate carboxylase (460 aa).

Belongs to the PEPCase type 2 family. In terms of assembly, homotetramer. Requires Mg(2+) as cofactor.

The catalysed reaction is oxaloacetate + phosphate = phosphoenolpyruvate + hydrogencarbonate. In terms of biological role, catalyzes the irreversible beta-carboxylation of phosphoenolpyruvate (PEP) to form oxaloacetate (OAA), a four-carbon dicarboxylic acid source for the tricarboxylic acid cycle. The protein is Phosphoenolpyruvate carboxylase of Pyrobaculum aerophilum (strain ATCC 51768 / DSM 7523 / JCM 9630 / CIP 104966 / NBRC 100827 / IM2).